Reading from the N-terminus, the 170-residue chain is Copper transporter 1 (170 aa).

The interval 1-29 (MDHDHMHGMPRPSSSSSSSPSSMMNNGSM) is disordered. Residues 9–29 (MPRPSSSSSSSPSSMMNNGSM) show a composition bias toward low complexity. Transmembrane regions (helical) follow at residues 65–85 (GMYA…EWLA) and 114–134 (IGLA…VFLV).

The protein belongs to the copper transporter (Ctr) (TC 1.A.56) family. SLC31A subfamily. As to expression, expressed in the root apex, lateral root primordia, embryo, trichomes, guard cells and pollen grains.

It localises to the membrane. In terms of biological role, copper transporter involved in copper acquisition and transport in leaves. Required for copper homeostasis and normal plant growth and development. The polypeptide is Copper transporter 1 (COPT1) (Arabidopsis thaliana (Mouse-ear cress)).